The chain runs to 465 residues: Protein CitXG (465 aa).

Residues 1 to 182 (MQHFFTTFST…QSLAQNHDFA (182 aa)) are apo-citrate lyase phosphoribosyl-dephospho-CoA transferase. The 2-(5''-triphosphoribosyl)-3'-dephosphocoenzyme-A synthase stretch occupies residues 183-465 (EHIGEQVYLA…TIFFLSFRGN (283 aa)).

The protein in the N-terminal section; belongs to the CitX family. It in the C-terminal section; belongs to the CitG/MdcB family.

The catalysed reaction is apo-[citrate lyase ACP] + 2'-(5''-triphospho-alpha-D-ribosyl)-3'-dephospho-CoA = holo-[citrate lyase ACP] + diphosphate. It carries out the reaction 3'-dephospho-CoA + ATP = 2'-(5''-triphospho-alpha-D-ribosyl)-3'-dephospho-CoA + adenine. Bifunctional enzyme that catalyzes formation of 2-(5''-triphosphoribosyl)-3'-dephosphocoenzyme-A, and then the transfer of this prosthetic group precursor to the apo-acyl carrier protein (gamma chain) of the citrate lyase to yield the holo-acyl carrier protein. This Haemophilus influenzae (strain ATCC 51907 / DSM 11121 / KW20 / Rd) protein is Protein CitXG (citXG).